The primary structure comprises 147 residues: MAGKKAPYGEFAGRKLKLKRKKFRWSDIRYKRRVLRLKEKSDPLEGAPQARGIVLEKIAVEAKQPNSAMRKAVRVQLIKNGKVVTAFTPGDGAINHIDEHDEVIIEGIGGPKGGSMGDIPGIRYKVVKVNRVSLKELVKGRKEKPRR.

The protein belongs to the universal ribosomal protein uS12 family. Part of the 30S ribosomal subunit.

Functionally, with S4 and S5 plays an important role in translational accuracy. Located at the interface of the 30S and 50S subunits. This chain is Small ribosomal subunit protein uS12, found in Thermococcus kodakarensis (strain ATCC BAA-918 / JCM 12380 / KOD1) (Pyrococcus kodakaraensis (strain KOD1)).